Reading from the N-terminus, the 3020-residue chain is Protein furry homolog (3020 aa).

A Phosphotyrosine modification is found at Y213. 3 disordered regions span residues 1378-1404 (GSSP…LKGN), 1529-1554 (ASGT…ESKI), and 1746-1773 (SSPV…GNLP). A phosphoserine mark is found at S1382 and S1383. The span at 1752–1772 (SGLNSSSTSSSISLGGSSGNL) shows a compositional bias: low complexity. S1936 and S1940 each carry phosphoserine. The span at 1937 to 1956 (RSSSPDLSSSSKLTASRKST) shows a compositional bias: low complexity. Disordered stretches follow at residues 1937–2042 (RSSS…PSHV) and 2355–2384 (LQNS…SNSN). Residues 1966–1976 (PGSGGGGGGSG) are compositionally biased toward gly residues. Polar residues predominate over residues 2016–2042 (ACTQQGLSSKTRSNSSLKESLTDPSHV). Positions 2369–2384 (AVTRSASSTSSGSNSN) are enriched in low complexity. Phosphoserine occurs at positions 2427 and 2428. Positions 2439 to 2458 (TSLVSSEDGPREQENMDDTN) are disordered. S2495 is modified (phosphoserine). Residues 2508-2535 (EERQLSRSTPSLNKMSHEDSDESSEEDL) are disordered. Phosphothreonine; by CDK1 is present on T2516. The span at 2526 to 2535 (DSDESSEEDL) shows a compositional bias: acidic residues. S2815 carries the phosphoserine modification.

The protein belongs to the furry protein family. In terms of assembly, when phosphorylated by CDK1, interacts with PLK1; this interaction occurs in mitotic cells, but not in interphase cells, and leads to further FRY phosphorylation by PLK1. Phosphorylated by AURKA, CDK1 and PLK1.

The protein localises to the cytoplasm. Its subcellular location is the cytoskeleton. It is found in the microtubule organizing center. It localises to the centrosome. The protein resides in the spindle pole. Its function is as follows. Plays a crucial role in the structural integrity of mitotic centrosomes and in the maintenance of spindle bipolarity by promoting PLK1 activity at the spindle poles in early mitosis. May function as a scaffold promoting the interaction between AURKA and PLK1, thereby enhancing AURKA-mediated PLK1 phosphorylation. This Mus musculus (Mouse) protein is Protein furry homolog (Fry).